The primary structure comprises 358 residues: DNA replication and repair protein RecF (358 aa).

33 to 40 (GENGAGKT) provides a ligand contact to ATP.

It belongs to the RecF family.

It localises to the cytoplasm. Its function is as follows. The RecF protein is involved in DNA metabolism; it is required for DNA replication and normal SOS inducibility. RecF binds preferentially to single-stranded, linear DNA. It also seems to bind ATP. The chain is DNA replication and repair protein RecF from Deinococcus geothermalis (strain DSM 11300 / CIP 105573 / AG-3a).